Here is a 180-residue protein sequence, read N- to C-terminus: Large ribosomal subunit protein uL5 (180 aa).

The protein belongs to the universal ribosomal protein uL5 family. Part of the 50S ribosomal subunit; part of the 5S rRNA/L5/L18/L25 subcomplex. Contacts the 5S rRNA and the P site tRNA. Forms a bridge to the 30S subunit in the 70S ribosome.

This is one of the proteins that bind and probably mediate the attachment of the 5S RNA into the large ribosomal subunit, where it forms part of the central protuberance. In the 70S ribosome it contacts protein S13 of the 30S subunit (bridge B1b), connecting the 2 subunits; this bridge is implicated in subunit movement. Contacts the P site tRNA; the 5S rRNA and some of its associated proteins might help stabilize positioning of ribosome-bound tRNAs. The polypeptide is Large ribosomal subunit protein uL5 (Rubrobacter xylanophilus (strain DSM 9941 / JCM 11954 / NBRC 16129 / PRD-1)).